The chain runs to 261 residues: CD40 ligand (261 aa).

Residues 1–22 lie on the Cytoplasmic side of the membrane; it reads MVETYHQPAPRSAATGLPVSMK. The helical; Signal-anchor for type II membrane protein transmembrane segment at 23–43 threads the bilayer; it reads IFMYLLTVFLITQMIGSALFA. The Extracellular segment spans residues 44–261; sequence VYLHRRLDKI…GFTSFGLLKL (218 aa). A THD domain is found at 122–261; that stretch reads IAAHVISEAS…GFTSFGLLKL (140 aa). Cys178 and Cys218 are joined by a disulfide. Asn240 carries an N-linked (GlcNAc...) asparagine glycan.

The protein belongs to the tumor necrosis factor family. In terms of assembly, homotrimer. Interacts with CD28. CD40 ligand, soluble form: Exists as either a monomer or a homotrimer. Forms a ternary complex between CD40 and integrins for CD40-CD40LG signaling. The soluble form derives from the membrane form by proteolytic processing.

It is found in the cell membrane. The protein resides in the cell surface. Its subcellular location is the secreted. Functionally, cytokine that acts as a ligand to CD40/TNFRSF5. Costimulates T-cell proliferation and cytokine production. Its cross-linking on T-cells generates a costimulatory signal which enhances the production of IL4 and IL10 in conjunction with the TCR/CD3 ligation and CD28 costimulation. Induces the activation of NF-kappa-B. Induces the activation of kinases MAPK8 and PAK2 in T-cells. Mediates B-cell proliferation in the absence of co-stimulus as well as IgE production in the presence of IL4. Involved in immunoglobulin class switching. Acts as a ligand for integrins, specifically ITGA5:ITGB1 and ITGAV:ITGB3; both integrins and the CD40 receptor are required for activation of CD40-CD40LG signaling, which have cell-type dependent effects, such as B-cell activation, NF-kappa-B signaling and anti-apoptotic signaling. This Aotus trivirgatus (Three-striped night monkey) protein is CD40 ligand (CD40LG).